Consider the following 335-residue polypeptide: DNA-directed RNA polymerase subunit alpha (335 aa).

The segment at 1 to 248 (MTIQTSRTLS…GLFAPLQEVS (248 aa)) is alpha N-terminal domain (alpha-NTD). An alpha C-terminal domain (alpha-CTD) region spans residues 256–335 (KPDEDNQKNQ…LPRTREKGKA (80 aa)).

It belongs to the RNA polymerase alpha chain family. In cyanobacteria the RNAP catalytic core is composed of 2 alpha, 1 beta, 1 beta', 1 gamma and 1 omega subunit. When a sigma factor is associated with the core the holoenzyme is formed, which can initiate transcription.

The enzyme catalyses RNA(n) + a ribonucleoside 5'-triphosphate = RNA(n+1) + diphosphate. In terms of biological role, DNA-dependent RNA polymerase catalyzes the transcription of DNA into RNA using the four ribonucleoside triphosphates as substrates. The protein is DNA-directed RNA polymerase subunit alpha of Synechococcus sp. (strain JA-2-3B'a(2-13)) (Cyanobacteria bacterium Yellowstone B-Prime).